Here is a 263-residue protein sequence, read N- to C-terminus: Antigen 10-3 (263 aa).

The signal sequence occupies residues 1–21 (MNIYLIGILCIVGLIISQGST). The disordered stretch occupies residues 70–207 (GNKKDKQPTQ…QINDGTSDKP (138 aa)). Residues 78–90 (TQKTTPKPTTPKQ) show a composition bias toward low complexity. Repeat copies occupy residues 81-107 (TTPK…TIKR), 108-134 (TTPK…TIKR), 135-161 (TTPK…TIKR), 162-188 (TTPK…TIKR), and 189-206 (TTPK…TSDK). Residues 81 to 189 (TTPKPTTPKQ…TSDTHTIKRT (109 aa)) are 5 X 27 AA tandem repeats. Basic and acidic residues-rich tracts occupy residues 95–104 (TSDKTSDTHT), 122–131 (TSDKTSDTHT), 149–158 (TSDKTSDTHT), and 176–185 (TSDKTSDTHT).

This is Antigen 10-3 from Schistosoma mansoni (Blood fluke).